Here is a 196-residue protein sequence, read N- to C-terminus: HTH-type transcriptional regulator BetI (196 aa).

The HTH tetR-type domain occupies 8-68 (EVRRAQLIDA…ATMRHILRDL (61 aa)). A DNA-binding region (H-T-H motif) is located at residues 31–50 (TLASVAQRANISTGIVSHYF).

The protein operates within amine and polyamine biosynthesis; betaine biosynthesis via choline pathway [regulation]. Functionally, repressor involved in the biosynthesis of the osmoprotectant glycine betaine. It represses transcription of the choline transporter BetT and the genes of BetAB involved in the synthesis of glycine betaine. The polypeptide is HTH-type transcriptional regulator BetI (Paraburkholderia phymatum (strain DSM 17167 / CIP 108236 / LMG 21445 / STM815) (Burkholderia phymatum)).